Consider the following 201-residue polypeptide: Sterile alpha motif domain-containing protein 12 (201 aa).

Residues 77–143 (WTQQDVCKWL…LQQVLQLKVR (67 aa)) enclose the SAM domain.

In terms of tissue distribution, expressed in the brain.

The sequence is that of Sterile alpha motif domain-containing protein 12 (SAMD12) from Homo sapiens (Human).